The primary structure comprises 398 residues: Phospholipase C (398 aa).

An N-terminal signal peptide occupies residues 1-28 (MKRKICKALICATLATSLWAGASTKVYA). Zn(2+)-binding residues include W29, H39, D84, H96, H154, D158, H164, H176, and E180. A Zn-dependent PLC domain is found at 29–278 (WDGKIDGTGT…HDVSEGNDPS (250 aa)). The linker stretch occupies residues 275–283 (NDPSVGKNV). The PLAT domain maps to 284–398 (KELVAYISTS…ISGNSTYNIK (115 aa)). Ca(2+) contacts are provided by D297, G299, T300, D301, D321, N322, G324, N325, D326, D364, and A365.

It belongs to the bacterial zinc-metallophospholipase C family. It depends on Ca(2+) as a cofactor. Requires Zn(2+) as cofactor.

The protein resides in the secreted. The catalysed reaction is a 1,2-diacyl-sn-glycero-3-phosphocholine + H2O = phosphocholine + a 1,2-diacyl-sn-glycerol + H(+). Its function is as follows. Bacterial hemolysins are exotoxins that attack blood cell membranes and cause cell rupture. Constitutes an essential virulence factor in gas gangrene. Binds to eukaryotic membranes where it hydrolyzes both phosphatidylcholine and sphingomyelin. The diacylglycerol produced can activate both the arachidonic acid pathway, leading to modulation of the inflammatory response cascade and thrombosis, and protein kinase C, leading to activation of eukaryotic phospholipases and further membrane damage. Acts on human and mouse erythrocytes, but not on rabbit or horse erythrocytes. The protein is Phospholipase C (plc) of Clostridium perfringens (strain 13 / Type A).